Here is a 108-residue protein sequence, read N- to C-terminus: BH3-like motif-containing cell death inducer (108 aa).

The BH3-like signature appears at Leu-5–Ile-12.

In terms of tissue distribution, ubiquitously expressed.

It is found in the cytoplasm. The protein resides in the mitochondrion. In terms of biological role, functions as a proapoptotic molecule through the caspase-dependent mitochondrial pathway of cell death. The sequence is that of BH3-like motif-containing cell death inducer (BLID) from Homo sapiens (Human).